A 132-amino-acid chain; its full sequence is Cell division protein FtsL (132 aa).

The Cytoplasmic segment spans residues M1 to E50. Residues K51 to I71 form a helical membrane-spanning segment. Topologically, residues R72–K132 are extracellular.

This sequence belongs to the FtsL family.

The protein localises to the cell membrane. In terms of biological role, essential cell division protein. The sequence is that of Cell division protein FtsL from Melissococcus plutonius (strain ATCC 35311 / DSM 29964 / CIP 104052 / LMG 20360 / NCIMB 702443).